An 86-amino-acid chain; its full sequence is Large ribosomal subunit protein bL31B (86 aa).

Belongs to the bacterial ribosomal protein bL31 family. Type B subfamily. Part of the 50S ribosomal subunit.

The polypeptide is Large ribosomal subunit protein bL31B (Streptococcus agalactiae serotype III (strain NEM316)).